The chain runs to 146 residues: Hemoglobin subunit beta (146 aa).

N-acetylvaline is present on Val-1. In terms of domain architecture, Globin spans 2-146 (HLTDAEKNLV…VANALAHKYH (145 aa)). His-63 lines the heme b pocket. At Lys-82 the chain carries N6-acetyllysine. His-92 is a binding site for heme b. Cys-93 is modified (S-nitrosocysteine). Lys-144 is modified (N6-acetyllysine).

This sequence belongs to the globin family. In terms of assembly, heterotetramer of two alpha chains and two beta chains. In terms of tissue distribution, red blood cells.

In terms of biological role, involved in oxygen transport from the lung to the various peripheral tissues. The chain is Hemoglobin subunit beta (HBB) from Mesocricetus brandti (Brandt's hamster).